The chain runs to 423 residues: Probable sodium/metabolite cotransporter BASS4, chloroplastic (423 aa).

A chloroplast-targeting transit peptide spans 1–55 (MVTTHHLCLLRSTVLSVPVRLRAPRAPPHPRLPTASASASSYHGPTHLRRLRPLR). The disordered stretch occupies residues 23–45 (APRAPPHPRLPTASASASSYHGP). Transmembrane regions (helical) follow at residues 96–116 (FLPL…TLGC), 123–140 (LSKY…LTLR), 153–173 (AGLF…QFIM), 182–202 (FITG…GVTL), 212–232 (LALA…PLSL), 244–264 (LPTE…IILG), 284–301 (GFSV…WIQV), 315–335 (AFAV…AFNA), and 389–409 (LLVI…SIIV).

This sequence belongs to the bile acid:sodium symporter (BASS) (TC 2.A.28) family.

Its subcellular location is the membrane. The protein localises to the plastid. It is found in the chloroplast envelope. Its function is as follows. May function as sodium-coupled metabolite transporter across the chloroplast envelope. The polypeptide is Probable sodium/metabolite cotransporter BASS4, chloroplastic (BASS4) (Oryza sativa subsp. indica (Rice)).